A 70-amino-acid chain; its full sequence is Non-histone chromosomal protein H6 (70 aa).

The interval 1-70 (MPKRKSATKG…AAGDGAGNAK (70 aa)) is disordered. Residues 30–45 (AKPKKAAAPKKAVKGK) are compositionally biased toward basic residues. The segment covering 46–57 (KAAENGDAKAEA) has biased composition (basic and acidic residues).

It belongs to the HMGN family.

The protein resides in the nucleus. It localises to the secreted. Functionally, non-histone protein that probably binds to the inner side of nucleosomal DNA, altering the association between the DNA and the nucleosome octamer. Oncorhyncin III has antibacterial activity against Gram-positive and Gram-negative bacteria at submicromolar concentrations. The sequence is that of Non-histone chromosomal protein H6 from Oncorhynchus mykiss (Rainbow trout).